Consider the following 176-residue polypeptide: Small ribosomal subunit protein bS6 (176 aa).

The tract at residues 97–176 (DQYTPNDSPP…VEPVDTTSEE (80 aa)) is disordered. A compositionally biased stretch (low complexity) spans 140–160 (AVETVEPPAEPAEPVEAVETV). The segment covering 161–176 (DTTEETVEPVDTTSEE) has biased composition (acidic residues).

The protein belongs to the bacterial ribosomal protein bS6 family.

In terms of biological role, binds together with bS18 to 16S ribosomal RNA. This Gloeothece citriformis (strain PCC 7424) (Cyanothece sp. (strain PCC 7424)) protein is Small ribosomal subunit protein bS6.